A 395-amino-acid polypeptide reads, in one-letter code: Chalcone synthase (395 aa).

Cysteine 169 is a catalytic residue.

It belongs to the thiolase-like superfamily. Chalcone/stilbene synthases family.

The catalysed reaction is (E)-4-coumaroyl-CoA + 3 malonyl-CoA + 3 H(+) = 2',4,4',6'-tetrahydroxychalcone + 3 CO2 + 4 CoA. It functions in the pathway secondary metabolite biosynthesis; flavonoid biosynthesis. The primary product of this enzyme is 4,2',4',6'-tetrahydroxychalcone (also termed naringenin-chalcone or chalcone) which can under specific conditions spontaneously isomerize into naringenin. The chain is Chalcone synthase (CHS) from Pinus strobus (Eastern white pine).